The primary structure comprises 523 residues: Excitatory amino acid transporter 3 (523 aa).

The Cytoplasmic portion of the chain corresponds to 1 to 18; that stretch reads MGKPTSSGCDWRRFLRNH. Residues 19-38 traverse the membrane as a helical segment; sequence WLLLSTVAAVVLGIVLGVVV. The Extracellular portion of the chain corresponds to 39-61; sequence RGHSELSNLDKFYFAFPGEILMR. A helical transmembrane segment spans residues 62–82; the sequence is MLKLVILPLIVSSMITGVAAL. Over 83–93 the chain is Cytoplasmic; the sequence is DSNVSGKIGLR. A helical membrane pass occupies residues 94 to 114; the sequence is AVVYYFSTTVIAVILGIVLVV. The Na(+) site is built by Tyr98, Thr101, and Thr102. Residues 115-204 lie on the Extracellular side of the membrane; the sequence is SIKPGVTQKV…KTKEYKIVGL (90 aa). 3 N-linked (GlcNAc...) asparagine glycosylation sites follow: Asn128, Asn178, and Asn194. The helical transmembrane segment at 205 to 228 threads the bilayer; the sequence is YSDGINVLGLIIFCLVFGLVIGKM. Topologically, residues 229 to 237 are cytoplasmic; sequence GEKGQILVD. A helical transmembrane segment spans residues 238 to 265; the sequence is FFNALSDATMKIVQIIMCYMPIGILFLI. The Extracellular segment spans residues 266–285; the sequence is AGKIIEVEDWEIFRKLGLYM. A helical membrane pass occupies residues 286 to 307; sequence ATVLSGLAIHSLIVLPLLYFIV. Topologically, residues 308–312 are cytoplasmic; the sequence is VRKNP. Residues 313 to 343 constitute an intramembrane region (discontinuously helical); the sequence is FRFALGMAQALLTALMISSSSATLPVTFRCA. L-aspartate is bound by residues Ser330 and Ser332. The Cytoplasmic portion of the chain corresponds to 344–352; that stretch reads EEKNQVDKR. The chain crosses the membrane as a helical span at residues 353 to 379; that stretch reads ITRFVLPVGATINMDGTALYEAVAAVF. 4 residues coordinate Na(+): Gly361, Thr363, Asn365, and Asp367. Residue Thr369 coordinates L-aspartate. The Extracellular portion of the chain corresponds to 380 to 392; it reads IAQLNGLDLSIGQ. An intramembrane region (discontinuously helical) is located at residues 393–426; the sequence is IVTISITATAASIGAAGVPQAGLVTMVIVLSAVG. Residues Ser404, Ile405, and Ala407 each contribute to the Na(+) site. Val410 lines the L-aspartate pocket. Residues 427 to 439 lie on the Extracellular side of the membrane; sequence LPAEDVTLIIAVD. Residues 440-461 traverse the membrane as a helical segment; sequence WLLDRFRTMVNVLGDAFGTGIV. Residues Arg446, Thr447, and Asn450 each contribute to the L-aspartate site. Positions 450 and 454 each coordinate Na(+). Topologically, residues 462-523 are cytoplasmic; it reads EKLSKKELEQ…TISFTQTSQF (62 aa). Ser516 and Ser521 each carry phosphoserine.

Belongs to the dicarboxylate/amino acid:cation symporter (DAACS) (TC 2.A.23) family. SLC1A1 subfamily. Homotrimer. Interacts with ARL6IP5. Interacts with RTN2 (via N-terminus); the interaction promotes cell surface expression of SLC1A1. Interacts with SORCS2; this interaction is important for normal expression at the cell membrane. In terms of tissue distribution, detected on neurons in the brain cortex, dentate gyrus and hippocampus CA2 region (at protein level). Expressed in whole brain, brain cortex, hippocampus, cerebellum, lung, kidney, small intestine and skeletal muscle. Expressed in the renal outer medulla, medullary ray and cortex (at protein level).

The protein localises to the cell membrane. Its subcellular location is the apical cell membrane. The protein resides in the synapse. It is found in the synaptosome. It localises to the early endosome membrane. The protein localises to the late endosome membrane. Its subcellular location is the recycling endosome membrane. It carries out the reaction K(+)(in) + L-glutamate(out) + 3 Na(+)(out) + H(+)(out) = K(+)(out) + L-glutamate(in) + 3 Na(+)(in) + H(+)(in). It catalyses the reaction K(+)(in) + L-aspartate(out) + 3 Na(+)(out) + H(+)(out) = K(+)(out) + L-aspartate(in) + 3 Na(+)(in) + H(+)(in). The enzyme catalyses D-aspartate(out) + K(+)(in) + 3 Na(+)(out) + H(+)(out) = D-aspartate(in) + K(+)(out) + 3 Na(+)(in) + H(+)(in). The catalysed reaction is K(+)(in) + L-cysteine(out) + 3 Na(+)(out) + H(+)(out) = K(+)(out) + L-cysteine(in) + 3 Na(+)(in) + H(+)(in). Sodium-dependent, high-affinity amino acid transporter that mediates the uptake of L-glutamate and also L-aspartate and D-aspartate. Can also transport L-cysteine. Functions as a symporter that transports one amino acid molecule together with two or three Na(+) ions and one proton, in parallel with the counter-transport of one K(+) ion. Mediates Cl(-) flux that is not coupled to amino acid transport; this avoids the accumulation of negative charges due to aspartate and Na(+) symport. Plays an important role in L-glutamate and L-aspartate reabsorption in renal tubuli. Plays a redundant role in the rapid removal of released glutamate from the synaptic cleft, which is essential for terminating the postsynaptic action of glutamate. Contributes to glutathione biosynthesis and protection against oxidative stress via its role in L-glutamate and L-cysteine transport. Negatively regulated by ARL6IP5. In Mus musculus (Mouse), this protein is Excitatory amino acid transporter 3 (Slc1a1).